We begin with the raw amino-acid sequence, 204 residues long: Ras-related protein Rab-1D (204 aa).

Residues 17 to 25, 35 to 42, 65 to 69, 123 to 126, and 153 to 155 each bind GTP; these read GDSGVGKSC, WTDTHIST, DTAGQ, NKTD, and SAK. An Effector region motif is present at residues 39 to 47; it reads HISTIGVDF. Residues 182 to 191 are compositionally biased toward basic and acidic residues; it reads PKPDEVDIKS. Positions 182–204 are disordered; the sequence is PKPDEVDIKSKNKTKSGGKKSFC. The segment covering 192-204 has biased composition (basic residues); that stretch reads KNKTKSGGKKSFC. Cys204 carries the S-geranylgeranyl cysteine lipid modification.

Belongs to the small GTPase superfamily. Rab family.

It is found in the cell membrane. The protein is Ras-related protein Rab-1D (rab1D) of Dictyostelium discoideum (Social amoeba).